The primary structure comprises 329 residues: GTPase Obg (329 aa).

The region spanning 1–159 (MQFIDQACIS…WLLHLELKLL (159 aa)) is the Obg domain. Residues 160 to 328 (AEVGIIGLPN…LLKNVWEKLE (169 aa)) form the OBG-type G domain. ATP contacts are provided by residues 166–173 (GLPNAGKS), 191–195 (FTTLI), 213–216 (DIPG), 280–283 (NKKE), and 309–311 (SAA). Serine 173 and threonine 193 together coordinate Mg(2+).

This sequence belongs to the TRAFAC class OBG-HflX-like GTPase superfamily. OBG GTPase family. In terms of assembly, monomer. It depends on Mg(2+) as a cofactor.

The protein resides in the cytoplasm. An essential GTPase which binds GTP, GDP and possibly (p)ppGpp with moderate affinity, with high nucleotide exchange rates and a fairly low GTP hydrolysis rate. Plays a role in control of the cell cycle, stress response, ribosome biogenesis and in those bacteria that undergo differentiation, in morphogenesis control. The polypeptide is GTPase Obg (Prochlorococcus marinus (strain MIT 9211)).